The primary structure comprises 191 residues: A-type ATP synthase subunit E 1 (191 aa).

It belongs to the V-ATPase E subunit family. Has multiple subunits with at least A(3), B(3), C, D, E, F, H, I and proteolipid K(x).

The protein resides in the cell membrane. Its function is as follows. Component of the A-type ATP synthase that produces ATP from ADP in the presence of a proton gradient across the membrane. In Methanospirillum hungatei JF-1 (strain ATCC 27890 / DSM 864 / NBRC 100397 / JF-1), this protein is A-type ATP synthase subunit E 1.